An 80-amino-acid chain; its full sequence is Defensin-like protein 291 (80 aa).

An N-terminal signal peptide occupies residues 1–29; sequence MAASKTTIFIVFVLCLSCTLLVNISGIQA. Cystine bridges form between C50/C70, C56/C75, and C62/C77.

This sequence belongs to the DEFL family.

It is found in the secreted. In Arabidopsis thaliana (Mouse-ear cress), this protein is Defensin-like protein 291.